A 498-amino-acid chain; its full sequence is PHD finger protein 10 (498 aa).

Over residues Met-1–Ala-10 the composition is skewed to low complexity. A disordered region spans residues Met-1–Gln-62. N-acetylalanine is present on Ala-2. Ser-12, Ser-36, and Ser-50 each carry phosphoserine. The interval Met-89 to Gln-185 is essential to induce neural progenitor proliferation. The SAY stretch occupies residues Met-89–Leu-295. Residue Lys-241 forms a Glycyl lysine isopeptide (Lys-Gly) (interchain with G-Cter in SUMO2) linkage. Ser-270 carries the post-translational modification Phosphoserine. The segment covering Glu-285 to Asp-296 has biased composition (low complexity). The interval Glu-285–Pro-368 is disordered. The segment at Leu-292–Asp-334 is essential to induce neural progenitor proliferation. 4 positions are modified to phosphoserine: Ser-297, Ser-301, Ser-327, and Ser-331. Positions Thr-318–Glu-328 are enriched in polar residues. Residues Lys-345 to Lys-359 show a composition bias toward basic and acidic residues. A PHD-type 1; degenerate zinc finger spans residues Ile-379–Cys-436. Lys-385 is covalently cross-linked (Glycyl lysine isopeptide (Lys-Gly) (interchain with G-Cter in SUMO2)). The segment at Ile-438 to Ala-481 adopts a PHD-type 2; degenerate zinc-finger fold.

This sequence belongs to the SAYP family. As to quaternary structure, component of neural progenitors-specific chromatin remodeling complex (npBAF complex) composed of at least, ARID1A/BAF250A or ARID1B/BAF250B, SMARCD1/BAF60A, SMARCD3/BAF60C, SMARCA2/BRM/BAF190B, SMARCA4/BRG1/BAF190A, SMARCB1/BAF47, SMARCC1/BAF155, SMARCE1/BAF57, SMARCC2/BAF170, PHF10/BAF45A, ACTL6A/BAF53A and actin. Interacts with ACTL6A/BAF53A, SMARCA2/BRM/BAF190B, SMARCA4/BRG1/BAF190A and PBRM1/BAF180.

The protein resides in the nucleus. Functionally, involved in transcription activity regulation by chromatin remodeling. Belongs to the neural progenitors-specific chromatin remodeling complex (npBAF complex) and is required for the proliferation of neural progenitors. During neural development a switch from a stem/progenitor to a post-mitotic chromatin remodeling mechanism occurs as neurons exit the cell cycle and become committed to their adult state. The transition from proliferating neural stem/progenitor cells to post-mitotic neurons requires a switch in subunit composition of the npBAF and nBAF complexes. As neural progenitors exit mitosis and differentiate into neurons, npBAF complexes which contain ACTL6A/BAF53A and PHF10/BAF45A, are exchanged for homologous alternative ACTL6B/BAF53B and DPF1/BAF45B or DPF3/BAF45C subunits in neuron-specific complexes (nBAF). The npBAF complex is essential for the self-renewal/proliferative capacity of the multipotent neural stem cells. The nBAF complex along with CREST plays a role regulating the activity of genes essential for dendrite growth. The protein is PHD finger protein 10 (PHF10) of Homo sapiens (Human).